We begin with the raw amino-acid sequence, 380 residues long: MEINTDKYKNITRNLEREMINLNPIQRGGILPTESKKIIYEYWDGYSVCDYCSGRLDRIETPPINEFLEDMSKFLGMDITRPTHGARESKYAVMNSICKEGDYVVLDGNAHYTSYVAIERAKLNYEKTDIGEYPTFRVIPESYAEKIDMLEDSKKNIGLILLTHVDGNYGNVADVEKVGKIAKSKGYPFLLNCAYSAGRMPIDGKKLNVDFIAASGHKSMAASGPCGLLSINKKYEDEVLETSKVNVVKELQMLGCTSRGIPILSLMASFERLIERVKKWDLELEKTRKVVNELEPLGFKQIGEKPRNHDIIRFETPILDEIAEKDKRRGFFFYEELKRRGLGGIRRGVTKEFKMSVYGLTNTQVDYVINSMKTIINELR.

Residues 86–87, N192, and 215–217 contribute to the pyridoxal 5'-phosphate site; these read AR and SGH. Residue K218 is modified to N6-(pyridoxal phosphate)lysine.

The protein belongs to the SepCysS family. In terms of assembly, homodimer. Interacts with SepRS. Requires pyridoxal 5'-phosphate as cofactor.

The enzyme catalyses O-phospho-L-seryl-tRNA(Cys) + hydrogen sulfide + H(+) = L-cysteinyl-tRNA(Cys) + phosphate. Converts O-phospho-L-seryl-tRNA(Cys) (Sep-tRNA(Cys)) to L-cysteinyl-tRNA(Cys) (Cys-tRNA(Cys)). The sequence is that of O-phospho-L-seryl-tRNA:Cys-tRNA synthase from Methanococcus maripaludis (strain C5 / ATCC BAA-1333).